A 341-amino-acid chain; its full sequence is Probable 2' cyclic ADP-D-ribose synthase TcpO (341 aa).

In terms of domain architecture, TIR spans 204-336 (KEYDIFVSHS…EIIHEILERI (133 aa)). Residues 213 to 214 (SS) and lysine 243 each bind NAD(+). Glutamate 279 is an active-site residue.

It catalyses the reaction NAD(+) + H2O = ADP-D-ribose + nicotinamide + H(+). The catalysed reaction is NAD(+) = 2'cADPR + nicotinamide + H(+). Its function is as follows. NAD(+) hydrolase (NADase) that catalyzes cleavage of NAD(+) into ADP-D-ribose (ADPR) and nicotinamide. In addition to ADPR, also generates a cyclization variant of cyclic ADPR (cADPR), termed v-cADPR (probably 2'cADPR). This is Probable 2' cyclic ADP-D-ribose synthase TcpO from Methanobrevibacter olleyae.